Reading from the N-terminus, the 429-residue chain is GDP-fucose protein O-fucosyltransferase 2 (429 aa).

Residues 1 to 21 (MATLSFVFLLLGAVSWPPASA) form the signal peptide. Position 53–57 (53–57 (PEGFN)) interacts with GDP-beta-L-fucose. The Proton acceptor role is filled by Glu-54. A disulfide bridge links Cys-161 with Cys-192. 3 N-linked (GlcNAc...) asparagine glycosylation sites follow: Asn-189, Asn-209, and Asn-259. GDP-beta-L-fucose is bound by residues 292–294 (HLR), Asp-371, and 388–389 (TF). Cys-412 and Cys-419 are disulfide-bonded.

It belongs to the glycosyltransferase 68 family.

The protein localises to the endoplasmic reticulum. Its subcellular location is the golgi apparatus. It carries out the reaction L-seryl-[protein] + GDP-beta-L-fucose = 3-O-(alpha-L-fucosyl)-L-seryl-[protein] + GDP + H(+). The catalysed reaction is L-threonyl-[protein] + GDP-beta-L-fucose = 3-O-(alpha-L-fucosyl)-L-threonyl-[protein] + GDP + H(+). It participates in protein modification; protein glycosylation. In terms of biological role, catalyzes the reaction that attaches fucose through an O-glycosidic linkage to a conserved serine or threonine residue in the consensus sequence C1-X-X-S/T-C2 of thrombospondin type I repeats (TSRs) where C1 and C2 are the first and second cysteines of the repeat, respectively. O-fucosylates members of several protein families including the ADAMTS, the thrombospondin (TSP) and spondin families. Required for the proper secretion of ADAMTS family members such as ADAMTSL1 and ADAMTS13. The O-fucosylation of TSRs is also required for restricting epithelial to mesenchymal transition (EMT), maintaining the correct patterning of mesoderm and localization of the definite endoderm. This chain is GDP-fucose protein O-fucosyltransferase 2 (POFUT2), found in Pan troglodytes (Chimpanzee).